The primary structure comprises 399 residues: Na(+)/H(+) antiporter NhaA (399 aa).

11 consecutive transmembrane segments (helical) span residues 14 to 34, 59 to 79, 95 to 115, 124 to 144, 154 to 174, 177 to 197, 213 to 233, 261 to 281, 290 to 310, 331 to 351, and 363 to 383; these read AGGI…NSPL, LIHW…GLEV, SLPT…YLLF, AGWA…MALL, VFLL…IAMF, TDLS…LVGL, LILW…GVII, FIIL…PMSF, VGIA…FSYI, VALM…LAFV, and LGIL…LAKV.

Belongs to the NhaA Na(+)/H(+) (TC 2.A.33) antiporter family.

The protein localises to the cell inner membrane. The catalysed reaction is Na(+)(in) + 2 H(+)(out) = Na(+)(out) + 2 H(+)(in). In terms of biological role, na(+)/H(+) antiporter that extrudes sodium in exchange for external protons. This is Na(+)/H(+) antiporter NhaA from Shewanella sediminis (strain HAW-EB3).